The sequence spans 264 residues: 4-oxalocrotonate decarboxylase (264 aa).

This sequence belongs to the hydratase/decarboxylase family.

It catalyses the reaction (3E)-2-oxohex-3-enedioate + H(+) = 2-oxopent-4-enoate + CO2. It participates in xenobiotic degradation; toluene degradation. In Pseudomonas putida (Arthrobacter siderocapsulatus), this protein is 4-oxalocrotonate decarboxylase (xylI).